A 129-amino-acid chain; its full sequence is Small ribosomal subunit protein uS8 (129 aa).

It belongs to the universal ribosomal protein uS8 family. As to quaternary structure, part of the 30S ribosomal subunit.

One of the primary rRNA binding proteins, it binds directly to 16S rRNA central domain where it helps coordinate assembly of the platform of the 30S subunit. In Archaeoglobus fulgidus (strain ATCC 49558 / DSM 4304 / JCM 9628 / NBRC 100126 / VC-16), this protein is Small ribosomal subunit protein uS8.